Reading from the N-terminus, the 787-residue chain is (-)-kolavenyl diphosphate synthase, chloroplastic (787 aa).

A chloroplast-targeting transit peptide spans 1–47 (MSFATSLPRPTTTGAAGFGLPLATCISLSVSHSFSPKFGICNNTSLR). Lys237 contributes to the substrate binding site. Asp368 and Asp370 together coordinate Mg(2+). Positions 368 to 371 (DSDD) match the DXDD motif motif. Residue Lys454 participates in substrate binding.

It belongs to the terpene synthase family. Tpsc subfamily. It depends on Mg(2+) as a cofactor. In terms of tissue distribution, expressed in peltate glandular trichomes of leaves. Highly expressed in the first leaf pair.

Its subcellular location is the plastid. The protein localises to the chloroplast. It carries out the reaction (2E,6E,10E)-geranylgeranyl diphosphate = (-)-kolavenyl diphosphate. Its activity is regulated as follows. Inhibited by high concentrations of magnesium. In terms of biological role, involved in the biosynthesis of clerodane diterpenoids natural products, including salvinorin A with potent agonistic activity on brain kappa-opioid receptors, thus conferring hallucinogenic properties. Diterpene synthase that catalyzes the formation of (-)-kolavenyl diphosphate from geranylgeranyl diphosphate (GGPP) as the first reaction in salvinorin A biosynthesis. The chain is (-)-kolavenyl diphosphate synthase, chloroplastic from Salvia divinorum (Maria pastora).